Here is a 248-residue protein sequence, read N- to C-terminus: DNA repair protein RecO (248 aa).

It belongs to the RecO family.

In terms of biological role, involved in DNA repair and RecF pathway recombination. The sequence is that of DNA repair protein RecO from Oleidesulfovibrio alaskensis (strain ATCC BAA-1058 / DSM 17464 / G20) (Desulfovibrio alaskensis).